Reading from the N-terminus, the 272-residue chain is Putative B3 domain-containing protein Os02g0455900 (272 aa).

The TF-B3 DNA-binding region spans 30 to 134 (GKVLMPSDVS…RFFICCRCTC (105 aa)). Residues 189-227 (TASLGCAAAQPPQVPPTPTPRRRRRSMMVHPEPPEHTTD) are disordered.

The protein resides in the nucleus. This chain is Putative B3 domain-containing protein Os02g0455900, found in Oryza sativa subsp. japonica (Rice).